Consider the following 291-residue polypeptide: Undecaprenyl-diphosphatase (291 aa).

The next 8 helical transmembrane spans lie at 1-21 (MFII…LTEF), 48-68 (SAFT…AWVF), 102-122 (LHVL…DDFI), 126-146 (LFSV…MIIA), 162-182 (ISYF…WPGF), 203-223 (SDFT…LSLL), 231-251 (IADI…GLIA), and 267-287 (FAIY…GFGI).

Belongs to the UppP family.

It localises to the cell membrane. The catalysed reaction is di-trans,octa-cis-undecaprenyl diphosphate + H2O = di-trans,octa-cis-undecaprenyl phosphate + phosphate + H(+). Functionally, catalyzes the dephosphorylation of undecaprenyl diphosphate (UPP). Confers resistance to bacitracin. In Staphylococcus aureus (strain MRSA252), this protein is Undecaprenyl-diphosphatase.